Reading from the N-terminus, the 330-residue chain is ATP-dependent Clp protease proteolytic subunit-related protein 3, chloroplastic (330 aa).

A chloroplast-targeting transit peptide spans 1–43; the sequence is MASCLQASMNSLLPRSSSFSPHPPLSSNSSGRRNLKTFRYAFR. A disordered region spans residues 7–32; that stretch reads ASMNSLLPRSSSFSPHPPLSSNSSGR. Positions 8–30 are enriched in low complexity; sequence SMNSLLPRSSSFSPHPPLSSNSS.

The protein belongs to the peptidase S14 family. As to quaternary structure, component of the chloroplastic Clp protease core complex which consist of at least 16 proteins: CLPP4 (3 copies), CLPP5 (3 copies), CLPR4 (2 copies), ClpP1 (1 copy), CLPP6 (1 copy), CLPR2 (1 copy), CLPT1 (1 copy), CLPT2 (1 copy) and 3 copies of CLPP3 and/or CLPR1 and/or CLPR3. The core complex is organized in two heptameric rings, one containing CLPP3,4,5,6 in a 1:2:3:1 ratio and the other CLPP1 and CLPR1,2,3,4 in a 3:1:1:1:1 ratio.

It localises to the plastid. Its subcellular location is the chloroplast. The polypeptide is ATP-dependent Clp protease proteolytic subunit-related protein 3, chloroplastic (Arabidopsis thaliana (Mouse-ear cress)).